An 808-amino-acid polypeptide reads, in one-letter code: Envelope glycoprotein B (808 aa).

Residues 1-19 (MVPNKHLLLIILSFSTACG) form the signal peptide. The Virion surface segment spans residues 20–701 (QTTPTTAVEK…TGILNFIKNP (682 aa)). N-linked (GlcNAc...) asparagine; by host glycosylation is present at N30. Intrachain disulfides connect C45-C498, C62-C454, C136-C201, C291-C338, and C520-C557. Positions 101-107 (IFNGWTR) are involved in fusion and/or binding to host membrane. N-linked (GlcNAc...) asparagine; by host glycosylation is present at N158. Residues 187–195 (GWLWGTYRT) are involved in fusion and/or binding to host membrane. Residues N239, N251, N285, N331, N344, N355, N361, N532, N569, N587, and N598 are each glycosylated (N-linked (GlcNAc...) asparagine; by host). 2 hydrophobic membrane proximal region regions span residues 647–699 (FDNS…NFIK) and 658–698 (IIQD…LNFI). A helical transmembrane segment spans residues 702-722 (LGGMFTFLLIGAVIILVILLV). At 723-808 (RRTNNMSQAP…KQISTEDKIV (86 aa)) the chain is on the intravirion side.

The protein belongs to the herpesviridae glycoprotein B family. In terms of assembly, homotrimer; disulfide-linked. Binds to heparan sulfate proteoglycans. Interacts with gH/gL heterodimer. Post-translationally, a proteolytic cleavage by host furin generates two subunits that remain linked by disulfide bonds.

It localises to the virion membrane. Its subcellular location is the host cell membrane. The protein localises to the host endosome membrane. It is found in the host Golgi apparatus membrane. Its function is as follows. Envelope glycoprotein that forms spikes at the surface of virion envelope. Essential for the initial attachment to heparan sulfate moieties of the host cell surface proteoglycans. Involved in fusion of viral and cellular membranes leading to virus entry into the host cell. Following initial binding to its host receptors, membrane fusion is mediated by the fusion machinery composed at least of gB and the heterodimer gH/gL. May be involved in the fusion between the virion envelope and the outer nuclear membrane during virion egress. The sequence is that of Envelope glycoprotein B from Saimiriine herpesvirus 2 (strain 11) (SaHV-2).